Here is a 157-residue protein sequence, read N- to C-terminus: S-ribosylhomocysteine lyase (157 aa).

Residues H53, H57, and C124 each contribute to the Fe cation site.

Belongs to the LuxS family. As to quaternary structure, homodimer. It depends on Fe cation as a cofactor.

The enzyme catalyses S-(5-deoxy-D-ribos-5-yl)-L-homocysteine = (S)-4,5-dihydroxypentane-2,3-dione + L-homocysteine. Functionally, involved in the synthesis of autoinducer 2 (AI-2) which is secreted by bacteria and is used to communicate both the cell density and the metabolic potential of the environment. The regulation of gene expression in response to changes in cell density is called quorum sensing. Catalyzes the transformation of S-ribosylhomocysteine (RHC) to homocysteine (HC) and 4,5-dihydroxy-2,3-pentadione (DPD). This chain is S-ribosylhomocysteine lyase, found in Borreliella afzelii (strain PKo) (Borrelia afzelii).